The following is a 470-amino-acid chain: Flotillin-like protein 1 (470 aa).

Cys35 is lipidated: S-palmitoyl cysteine. The stretch at 305–354 forms a coiled coil; sequence EYETKVQEANWELYNKQKQAEAVLYEKQKQAEAQKAQADAAFYSKQKEAE.

This sequence belongs to the band 7/mec-2 family. Flotillin subfamily. May be palmitoylated.

It is found in the cell membrane. It localises to the membrane. Its subcellular location is the caveola. Its function is as follows. May act as a scaffolding protein within caveolar membranes, functionally participating in formation of caveolae or caveolae-like vesicles. The chain is Flotillin-like protein 1 (FLOT1) from Arabidopsis thaliana (Mouse-ear cress).